The chain runs to 297 residues: Ribosomal protein L11 methyltransferase (297 aa).

S-adenosyl-L-methionine-binding residues include Thr152, Gly173, Asp195, and Asn234.

The protein belongs to the methyltransferase superfamily. PrmA family.

It localises to the cytoplasm. The enzyme catalyses L-lysyl-[protein] + 3 S-adenosyl-L-methionine = N(6),N(6),N(6)-trimethyl-L-lysyl-[protein] + 3 S-adenosyl-L-homocysteine + 3 H(+). Methylates ribosomal protein L11. The chain is Ribosomal protein L11 methyltransferase from Cupriavidus pinatubonensis (strain JMP 134 / LMG 1197) (Cupriavidus necator (strain JMP 134)).